We begin with the raw amino-acid sequence, 281 residues long: CDAN1-interacting nuclease 1 (281 aa).

Phosphothreonine is present on Thr-114.

The protein resides in the nucleus. The protein localises to the cytoplasm. Functionally, plays a role in erythroid cell differentiation. The chain is CDAN1-interacting nuclease 1 from Mus musculus (Mouse).